The following is a 566-amino-acid chain: Putative sulfite reductase [NADPH] hemoprotein beta-component (566 aa).

[4Fe-4S] cluster-binding residues include Cys-430, Cys-436, Cys-475, and Cys-479. Siroheme is bound at residue Cys-479.

Belongs to the nitrite and sulfite reductase 4Fe-4S domain family. As to quaternary structure, alpha(8)-beta(8). The alpha component is a flavoprotein, the beta component is a hemoprotein. Siroheme serves as cofactor. [4Fe-4S] cluster is required as a cofactor.

The enzyme catalyses hydrogen sulfide + 3 NADP(+) + 3 H2O = sulfite + 3 NADPH + 4 H(+). It functions in the pathway sulfur metabolism; hydrogen sulfide biosynthesis; hydrogen sulfide from sulfite (NADPH route): step 1/1. In terms of biological role, component of the sulfite reductase complex that catalyzes the 6-electron reduction of sulfite to sulfide. This is one of several activities required for the biosynthesis of L-cysteine from sulfate. The sequence is that of Putative sulfite reductase [NADPH] hemoprotein beta-component from Buchnera aphidicola subsp. Schizaphis graminum (strain Sg).